Consider the following 285-residue polypeptide: Bifunctional protein FolD (285 aa).

NADP(+) is bound by residues 165-167 and serine 190; that span reads GAS.

This sequence belongs to the tetrahydrofolate dehydrogenase/cyclohydrolase family. Homodimer.

It catalyses the reaction (6R)-5,10-methylene-5,6,7,8-tetrahydrofolate + NADP(+) = (6R)-5,10-methenyltetrahydrofolate + NADPH. The catalysed reaction is (6R)-5,10-methenyltetrahydrofolate + H2O = (6R)-10-formyltetrahydrofolate + H(+). The protein operates within one-carbon metabolism; tetrahydrofolate interconversion. Functionally, catalyzes the oxidation of 5,10-methylenetetrahydrofolate to 5,10-methenyltetrahydrofolate and then the hydrolysis of 5,10-methenyltetrahydrofolate to 10-formyltetrahydrofolate. This chain is Bifunctional protein FolD, found in Cupriavidus metallidurans (strain ATCC 43123 / DSM 2839 / NBRC 102507 / CH34) (Ralstonia metallidurans).